A 277-amino-acid chain; its full sequence is 2-dehydro-3-deoxyphosphooctonate aldolase (277 aa).

Belongs to the KdsA family.

Its subcellular location is the cytoplasm. The catalysed reaction is D-arabinose 5-phosphate + phosphoenolpyruvate + H2O = 3-deoxy-alpha-D-manno-2-octulosonate-8-phosphate + phosphate. It functions in the pathway carbohydrate biosynthesis; 3-deoxy-D-manno-octulosonate biosynthesis; 3-deoxy-D-manno-octulosonate from D-ribulose 5-phosphate: step 2/3. Its pathway is bacterial outer membrane biogenesis; lipopolysaccharide biosynthesis. This is 2-dehydro-3-deoxyphosphooctonate aldolase from Dichelobacter nodosus (strain VCS1703A).